The primary structure comprises 362 residues: Protein RecA (362 aa).

77–84 serves as a coordination point for ATP; it reads GPESSGKT.

It belongs to the RecA family.

The protein resides in the cytoplasm. In terms of biological role, can catalyze the hydrolysis of ATP in the presence of single-stranded DNA, the ATP-dependent uptake of single-stranded DNA by duplex DNA, and the ATP-dependent hybridization of homologous single-stranded DNAs. It interacts with LexA causing its activation and leading to its autocatalytic cleavage. This is Protein RecA from Rhizobium etli (strain CIAT 652).